The primary structure comprises 372 residues: 1,3,6,8-tetrahydroxynaphthalene synthase (372 aa).

Cysteine 138 is a catalytic residue.

It belongs to the thiolase-like superfamily. Chalcone/stilbene synthases family. In terms of assembly, homodimer.

The enzyme catalyses 5 malonyl-CoA + 5 H(+) = naphthalene-1,3,6,8-tetrol + 5 CO2 + 5 CoA + H2O. The protein operates within pigment biosynthesis; melanin biosynthesis. Its function is as follows. Involved in the biosynthesis of melanin but also various secondary metabolites containing a naphthoquinone ring. Catalyzes the iterative condensation of five CoA-linked malonyl units to form a pentaketide intermediate. THNS subsequently catalyzes the dual intramolecular Claisen and aldol condensations of this linear intermediate to produce the fused ring of 1,3,6,8-tetrahydroxynaphthalene (THN). The polypeptide is 1,3,6,8-tetrahydroxynaphthalene synthase (Streptomyces griseus).